A 1347-amino-acid polypeptide reads, in one-letter code: Protocadherin-11 X-linked (1347 aa).

A signal peptide spans 1 to 23 (MDLLSGTYIFAVLLACVVFHSGA). Residues 24 to 812 (QEKNYTIREE…VSSPTSDYVK (789 aa)) lie on the Extracellular side of the membrane. Cadherin domains lie at 26–139 (KNYT…APLF), 140–249 (PATV…HPVF), 250–355 (KETE…VPSI), 362–466 (NPVN…APVF), 467–570 (TQSF…SPVF), 571–673 (THNE…KPVF), and 677–795 (PSNY…APVT). N-linked (GlcNAc...) asparagine glycosylation is found at Asn-27, Asn-48, and Asn-54. The N-linked (GlcNAc...) asparagine glycan is linked to Asn-344. N-linked (GlcNAc...) asparagine glycosylation occurs at Asn-553. Asn-773 carries an N-linked (GlcNAc...) asparagine glycan. A helical membrane pass occupies residues 813–833 (ILVAAVAGTITVVVVIFITAV). At 834–1347 (VRCRQAPHLK…DSPVMEEHPL (514 aa)) the chain is on the cytoplasmic side. Disordered stretches follow at residues 1057–1091 (LPEG…GYPQ), 1097–1116 (RATP…ESTF), and 1325–1347 (TFTP…EHPL).

The protein localises to the cell membrane. Its function is as follows. Potential calcium-dependent cell-adhesion protein. This chain is Protocadherin-11 X-linked (PCDH11X), found in Pan paniscus (Pygmy chimpanzee).